The chain runs to 219 residues: Probable octanoyltransferase (219 aa).

The BPL/LPL catalytic domain maps to 43-219; that stretch reads QPPKPTIITS…NNLDSFLMSK (177 aa). Substrate contacts are provided by residues 83-90, 151-153, and 164-166; these read RGGQTTFH, AIG, and GLA. Cys182 serves as the catalytic Acyl-thioester intermediate.

It belongs to the LipB family.

The enzyme catalyses octanoyl-[ACP] + L-lysyl-[protein] = N(6)-octanoyl-L-lysyl-[protein] + holo-[ACP] + H(+). It functions in the pathway protein modification; protein lipoylation via endogenous pathway; protein N(6)-(lipoyl)lysine from octanoyl-[acyl-carrier-protein]: step 1/2. Catalyzes the transfer of endogenously produced octanoic acid from octanoyl-acyl-carrier-protein onto the lipoyl domains of lipoate-dependent enzymes. Lipoyl-ACP can also act as a substrate although octanoyl-ACP is likely to be the physiological substrate. The sequence is that of Probable octanoyltransferase from Schizosaccharomyces pombe (strain 972 / ATCC 24843) (Fission yeast).